Reading from the N-terminus, the 88-residue chain is Putative carnobacteriocin-BM1 immunity protein (88 aa).

Could impart immunity to carnobacteriocin-BM1 to naturally sensitive host strains. The protein is Putative carnobacteriocin-BM1 immunity protein of Carnobacterium maltaromaticum (Carnobacterium piscicola).